Here is a 146-residue protein sequence, read N- to C-terminus: Hemoglobin subunit beta (146 aa).

N-acetylvaline is present on valine 1. Residues 2 to 146 (HLTAEEKAAV…VATALAHKYH (145 aa)) enclose the Globin domain. Threonine 12 is modified (phosphothreonine). Serine 44 carries the post-translational modification Phosphoserine. Lysine 59 bears the N6-acetyllysine mark. Histidine 63 is a heme b binding site. N6-acetyllysine is present on lysine 82. Residue histidine 92 participates in heme b binding. Cysteine 93 carries the S-nitrosocysteine modification. Lysine 144 carries the post-translational modification N6-acetyllysine.

Belongs to the globin family. In terms of assembly, heterotetramer of two alpha chains and two beta chains. Red blood cells.

Its function is as follows. Involved in oxygen transport from the lung to the various peripheral tissues. The chain is Hemoglobin subunit beta (HBB) from Mustela lutreola (European mink).